Reading from the N-terminus, the 306-residue chain is Secretory carrier-associated membrane protein 1 (306 aa).

Residues methionine 1–alanine 66 form a disordered region. Topologically, residues methionine 1–glutamine 141 are cytoplasmic. Residues lysine 25–alanine 36 are compositionally biased toward gly residues. Low complexity predominate over residues proline 40 to serine 55. The stretch at leucine 72 to alanine 109 forms a coiled coil. Helical transmembrane passes span tyrosine 142 to valine 162, isoleucine 174 to tyrosine 194, phenylalanine 209 to alanine 229, and isoleucine 257 to isoleucine 277. Residues glutamine 278–phenylalanine 306 are Cytoplasmic-facing.

This sequence belongs to the SCAMP family.

It localises to the cell membrane. Its subcellular location is the cytoplasmic vesicle. The protein localises to the secretory vesicle membrane. Probably involved in membrane trafficking. The sequence is that of Secretory carrier-associated membrane protein 1 (SCAMP1) from Oryza sativa subsp. japonica (Rice).